The primary structure comprises 458 residues: UDP-N-acetylmuramoylalanine--D-glutamate ligase (458 aa).

124 to 130 (GSDGKTT) contributes to the ATP binding site.

It belongs to the MurCDEF family.

It localises to the cytoplasm. The catalysed reaction is UDP-N-acetyl-alpha-D-muramoyl-L-alanine + D-glutamate + ATP = UDP-N-acetyl-alpha-D-muramoyl-L-alanyl-D-glutamate + ADP + phosphate + H(+). Its pathway is cell wall biogenesis; peptidoglycan biosynthesis. Functionally, cell wall formation. Catalyzes the addition of glutamate to the nucleotide precursor UDP-N-acetylmuramoyl-L-alanine (UMA). The polypeptide is UDP-N-acetylmuramoylalanine--D-glutamate ligase (Clostridium perfringens (strain 13 / Type A)).